Reading from the N-terminus, the 294-residue chain is 33 kDa chaperonin (294 aa).

2 disulfide bridges follow: Cys237–Cys239 and Cys270–Cys273.

This sequence belongs to the HSP33 family. In terms of processing, under oxidizing conditions two disulfide bonds are formed involving the reactive cysteines. Under reducing conditions zinc is bound to the reactive cysteines and the protein is inactive.

Its subcellular location is the cytoplasm. In terms of biological role, redox regulated molecular chaperone. Protects both thermally unfolding and oxidatively damaged proteins from irreversible aggregation. Plays an important role in the bacterial defense system toward oxidative stress. This Geobacillus kaustophilus (strain HTA426) protein is 33 kDa chaperonin.